The following is a 118-amino-acid chain: Ribonuclease P protein component 2 (118 aa).

Belongs to the eukaryotic/archaeal RNase P protein component 2 family. In terms of assembly, consists of a catalytic RNA component and at least 4-5 protein subunits.

It is found in the cytoplasm. The enzyme catalyses Endonucleolytic cleavage of RNA, removing 5'-extranucleotides from tRNA precursor.. Part of ribonuclease P, a protein complex that generates mature tRNA molecules by cleaving their 5'-ends. The chain is Ribonuclease P protein component 2 from Pyrococcus abyssi (strain GE5 / Orsay).